Here is a 207-residue protein sequence, read N- to C-terminus: Large ribosomal subunit protein uL4 (207 aa).

The interval 49–78 is disordered; it reads HAVKNRSAVRGGGKKPWRQKGTGRARQGSI. Residues 60-71 are compositionally biased toward basic residues; it reads GGKKPWRQKGTG.

Belongs to the universal ribosomal protein uL4 family. In terms of assembly, part of the 50S ribosomal subunit.

One of the primary rRNA binding proteins, this protein initially binds near the 5'-end of the 23S rRNA. It is important during the early stages of 50S assembly. It makes multiple contacts with different domains of the 23S rRNA in the assembled 50S subunit and ribosome. Its function is as follows. Forms part of the polypeptide exit tunnel. This is Large ribosomal subunit protein uL4 from Ligilactobacillus salivarius (strain UCC118) (Lactobacillus salivarius).